A 547-amino-acid chain; its full sequence is Glucose-6-phosphate isomerase (547 aa).

Glu350 serves as the catalytic Proton donor. Active-site residues include His381 and Lys510.

It belongs to the GPI family.

It localises to the cytoplasm. The enzyme catalyses alpha-D-glucose 6-phosphate = beta-D-fructose 6-phosphate. Its pathway is carbohydrate biosynthesis; gluconeogenesis. It participates in carbohydrate degradation; glycolysis; D-glyceraldehyde 3-phosphate and glycerone phosphate from D-glucose: step 2/4. Its function is as follows. Catalyzes the reversible isomerization of glucose-6-phosphate to fructose-6-phosphate. This Mesorhizobium japonicum (strain LMG 29417 / CECT 9101 / MAFF 303099) (Mesorhizobium loti (strain MAFF 303099)) protein is Glucose-6-phosphate isomerase.